We begin with the raw amino-acid sequence, 148 residues long: Urease accessory protein UreE (148 aa).

It belongs to the UreE family.

The protein localises to the cytoplasm. Functionally, involved in urease metallocenter assembly. Binds nickel. Probably functions as a nickel donor during metallocenter assembly. The polypeptide is Urease accessory protein UreE (Nostoc punctiforme (strain ATCC 29133 / PCC 73102)).